Here is a 103-residue protein sequence, read N- to C-terminus: uncharacterized protein (103 aa).

The tract at residues 69-103 (SSISYPGGGGGGGGSAKSLSSSKPGGGGGSPLIFL) is disordered. Composition is skewed to gly residues over residues 74–83 (PGGGGGGGGS) and 92–103 (PGGGGGSPLIFL).

This is an uncharacterized protein from Saccharomyces cerevisiae (strain ATCC 204508 / S288c) (Baker's yeast).